The following is a 170-amino-acid chain: ATP synthase subunit b (170 aa).

The helical transmembrane segment at 15 to 37 (GDILFQLLAMLILLALLKKYALG) threads the bilayer.

This sequence belongs to the ATPase B chain family. In terms of assembly, F-type ATPases have 2 components, F(1) - the catalytic core - and F(0) - the membrane proton channel. F(1) has five subunits: alpha(3), beta(3), gamma(1), delta(1), epsilon(1). F(0) has three main subunits: a(1), b(2) and c(10-14). The alpha and beta chains form an alternating ring which encloses part of the gamma chain. F(1) is attached to F(0) by a central stalk formed by the gamma and epsilon chains, while a peripheral stalk is formed by the delta and b chains. The F(1)F(0) complex interacts with SpoIIIJ and YqjG; YqgA is found in the same complex.

It localises to the cell membrane. Functionally, f(1)F(0) ATP synthase produces ATP from ADP in the presence of a proton or sodium gradient. F-type ATPases consist of two structural domains, F(1) containing the extramembraneous catalytic core and F(0) containing the membrane proton channel, linked together by a central stalk and a peripheral stalk. During catalysis, ATP synthesis in the catalytic domain of F(1) is coupled via a rotary mechanism of the central stalk subunits to proton translocation. Component of the F(0) channel, it forms part of the peripheral stalk, linking F(1) to F(0). The chain is ATP synthase subunit b from Bacillus subtilis (strain 168).